The sequence spans 186 residues: Nicotinamide-nucleotide adenylyltransferase (186 aa).

Belongs to the archaeal NMN adenylyltransferase family.

The protein resides in the cytoplasm. It catalyses the reaction beta-nicotinamide D-ribonucleotide + ATP + H(+) = diphosphate + NAD(+). It functions in the pathway cofactor biosynthesis; NAD(+) biosynthesis; NAD(+) from nicotinamide D-ribonucleotide: step 1/1. This is Nicotinamide-nucleotide adenylyltransferase from Pyrococcus abyssi (strain GE5 / Orsay).